The chain runs to 514 residues: MTTRKRPLALLILDGWGYRENTQKNAVFHANTPVLDQLNAKYPNSLISGSGIDVGLPDGQMGNSEVGHINIGSGRIVYQELTRISKAIDDGEFDTNPALTKAIDDAIEVNGAVHIMGLLSPGGVHSHQDHIEAMCRLAVKRGAKKVYLHAFLDGRDTPPRSAKPGLAHFEELFKSLGTGQVASVIGRYYAMDRDNRWDRVSQAYELITEGKSLHQSATAVDAIEAAYTRDENDEFVGSTVIPDAQGNIAKLVDNDALIFMNFRADRARQITRSFVDADFDGFERAVTPKINFVMLTEYAANIKAAIAYPSSDLVNTLGETLQDRDLTQLRISETEKYAHVTFFFNGGKEEPFKGEDRILIQSPKVATYDLQPEMSSTELTDKLVAAIESTEYDVIICNYPNGDMVGHTGNFDAAVKACEAVDTCIGRVVEALEKVGGECLITADHGNAEQMTDESTGQAHTAHTSELIPLIYVGRDAEIENGGRLSDLAPTMLTLMGQDVPEEMTGRSIIKLKE.

Mn(2+) is bound by residues Asp-14 and Ser-64. The active-site Phosphoserine intermediate is Ser-64. Substrate-binding positions include His-125, 155-156 (RD), Arg-187, Arg-193, 263-266 (RADR), and Lys-336. Residues Asp-403, His-407, Asp-444, His-445, and His-463 each coordinate Mn(2+).

Belongs to the BPG-independent phosphoglycerate mutase family. Monomer. It depends on Mn(2+) as a cofactor.

It catalyses the reaction (2R)-2-phosphoglycerate = (2R)-3-phosphoglycerate. The protein operates within carbohydrate degradation; glycolysis; pyruvate from D-glyceraldehyde 3-phosphate: step 3/5. Catalyzes the interconversion of 2-phosphoglycerate and 3-phosphoglycerate. This is 2,3-bisphosphoglycerate-independent phosphoglycerate mutase from Shewanella pealeana (strain ATCC 700345 / ANG-SQ1).